Consider the following 4092-residue polypeptide: Dynein heavy chain, cytoplasmic (4092 aa).

The stem stretch occupies residues 1–1757; that stretch reads MCKNEARLAN…FISQSGYLLQ (1757 aa). Coiled-coil stretches lie at residues 154 to 175, 486 to 508, 542 to 566, 932 to 959, 1042 to 1063, and 1681 to 1705; these read VETI…QQLH, KLEQ…LQNT, KVLE…TGLE, VIKL…YVKE, YERD…VEDM, and KGLL…LVEY. AAA stretches follow at residues 1758-1979, 2036-2273, 2379-2628, and 2722-2984; these read YKFE…VLRN, QCLK…NDLV, SLEA…LVRG, and TFCD…KVGV. ATP contacts are provided by residues 1796 to 1803, 2074 to 2081, 2418 to 2425, and 2760 to 2767; these read GPAGTGKT, GKAGCGKT, GPPGSGKT, and GASRTGKT. Coiled-coil stretches lie at residues 2993 to 3092, 3242 to 3300, and 3532 to 3608; these read IDGL…KRKE, KTKA…KSLT, and ITLT…EEFF. Residues 2993-3300 form a stalk region; it reads IDGLRALVKL…RSISLVKSLT (308 aa). 2 AAA regions span residues 3370–3599 and 3760–3970; these read LVTL…NIEK and LNWF…YLEN.

The protein belongs to the dynein heavy chain family. As to quaternary structure, the dynein complex consists of at least two heavy chains and a number of intermediate and light chains. Interacts with DYN3.

The protein resides in the cytoplasm. The protein localises to the cytoskeleton. Cytoplasmic dynein acts as a motor for the intracellular retrograde motility of vesicles and organelles along microtubules. Dynein has ATPase activity; the force-producing power stroke is thought to occur on release of ADP. Required to maintain uniform nuclear distribution in hyphae. May play an important role in the proper orientation of the mitotic spindle into the budding daughter cell yeast. Probably required for normal progression of the cell cycle. The sequence is that of Dynein heavy chain, cytoplasmic (DYN1) from Saccharomyces cerevisiae (strain ATCC 204508 / S288c) (Baker's yeast).